We begin with the raw amino-acid sequence, 414 residues long: Serine/threonine transporter SstT (414 aa).

Transmembrane regions (helical) follow at residues 16–36 (GSLV…AWIS), 46–66 (LGTL…LMLV), 84–104 (ILFL…VFSF), 143–163 (ALLN…GFAL), 180–200 (AVTF…FGLV), 219–239 (LVVL…LLVF), 300–320 (MAGA…TLGV), and 332–352 (VVAS…LLLI).

The protein belongs to the dicarboxylate/amino acid:cation symporter (DAACS) (TC 2.A.23) family.

It localises to the cell inner membrane. The catalysed reaction is L-serine(in) + Na(+)(in) = L-serine(out) + Na(+)(out). It carries out the reaction L-threonine(in) + Na(+)(in) = L-threonine(out) + Na(+)(out). Involved in the import of serine and threonine into the cell, with the concomitant import of sodium (symport system). This is Serine/threonine transporter SstT from Salmonella newport (strain SL254).